Here is a 508-residue protein sequence, read N- to C-terminus: tRNA-2-methylthio-N(6)-dimethylallyladenosine synthase (508 aa).

The MTTase N-terminal domain maps to 13 to 131 (KTYEVRTYGC…LPVLLERARV (119 aa)). 6 residues coordinate [4Fe-4S] cluster: Cys22, Cys60, Cys94, Cys168, Cys172, and Cys175. Residues 154-385 (RESAYAAWVS…ALQEEISWDE (232 aa)) form the Radical SAM core domain. Residues 387–455 (KKQVGRTLEL…PHHLLAEGPV (69 aa)) form the TRAM domain.

It belongs to the methylthiotransferase family. MiaB subfamily. As to quaternary structure, monomer. [4Fe-4S] cluster is required as a cofactor.

The protein localises to the cytoplasm. The enzyme catalyses N(6)-dimethylallyladenosine(37) in tRNA + (sulfur carrier)-SH + AH2 + 2 S-adenosyl-L-methionine = 2-methylsulfanyl-N(6)-dimethylallyladenosine(37) in tRNA + (sulfur carrier)-H + 5'-deoxyadenosine + L-methionine + A + S-adenosyl-L-homocysteine + 2 H(+). In terms of biological role, catalyzes the methylthiolation of N6-(dimethylallyl)adenosine (i(6)A), leading to the formation of 2-methylthio-N6-(dimethylallyl)adenosine (ms(2)i(6)A) at position 37 in tRNAs that read codons beginning with uridine. In Streptomyces avermitilis (strain ATCC 31267 / DSM 46492 / JCM 5070 / NBRC 14893 / NCIMB 12804 / NRRL 8165 / MA-4680), this protein is tRNA-2-methylthio-N(6)-dimethylallyladenosine synthase.